The primary structure comprises 223 residues: Sigma non-opioid intracellular receptor 1 (223 aa).

Over 1–7 (MAVLSSR) the chain is Lumenal. The helical transmembrane segment at 8–29 (AMRAALGLAVLAVVIQLLRTWL) threads the bilayer. The Cytoplasmic segment spans residues 30–223 (SSKSYLFNQK…HTYLSELGLS (194 aa)). Positions 98 to 105 (SLTEYILL) are important for ligand-binding. The segment at 176 to 223 (FIPSTMGFALADTIFSTQDFCTLFYTFRIYARCLLLETHTYLSELGLS) is C-terminal hydrophobic region.

The protein belongs to the ERG2 family. In terms of assembly, homotrimer.

Its subcellular location is the nucleus inner membrane. It is found in the nucleus outer membrane. The protein resides in the nucleus envelope. It localises to the cytoplasmic vesicle. The protein localises to the endoplasmic reticulum membrane. Its subcellular location is the membrane. Functionally, may function in lipid transport from the endoplasmic reticulum and be involved in a wide array of cellular functions probably through regulation of the biogenesis of lipid microdomains at the plasma membrane. May regulate calcium efflux at the endoplasmic reticulum. The sequence is that of Sigma non-opioid intracellular receptor 1 (SIGMAR1) from Taricha granulosa (Roughskin newt).